The chain runs to 333 residues: 3-isopropylmalate/3-methylmalate dehydrogenase (333 aa).

Positions 81, 91, 112, and 203 each coordinate substrate. D203, D227, and D231 together coordinate Mg(2+). 260 to 272 (GSAPDIAGKKIAN) lines the NAD(+) pocket.

Belongs to the isocitrate and isopropylmalate dehydrogenases family. As to quaternary structure, homotetramer. Mg(2+) serves as cofactor. Mn(2+) is required as a cofactor.

Its subcellular location is the cytoplasm. The enzyme catalyses (2R,3S)-3-isopropylmalate + NAD(+) = 4-methyl-2-oxopentanoate + CO2 + NADH. The catalysed reaction is (2R,3S)-3-methylmalate + NAD(+) = 2-oxobutanoate + CO2 + NADH. It carries out the reaction (R)-malate + NAD(+) = pyruvate + CO2 + NADH. It functions in the pathway amino-acid biosynthesis; L-leucine biosynthesis; L-leucine from 3-methyl-2-oxobutanoate: step 3/4. Its pathway is amino-acid biosynthesis; L-isoleucine biosynthesis; 2-oxobutanoate from pyruvate: step 3/3. Its function is as follows. Catalyzes the oxidation of 3-carboxy-2-hydroxy-4-methylpentanoate (3-isopropylmalate) to 3-carboxy-4-methyl-2-oxopentanoate, which decarboxylates to 4-methyl-2-oxopentanoate (2-oxoisocaproate). Also catalyzes the oxidative decarboxylation of 3-methylmalate to 2-oxobutyrate, and that of D-malate to pyruvate. Cannot use NADP(+) instead of NAD(+). Cannot catalyze the oxidation of L-malate, L-tartrate, D-tartrate, DL-isocitrate, or DL-lactate. This chain is 3-isopropylmalate/3-methylmalate dehydrogenase (leuB), found in Methanocaldococcus jannaschii (strain ATCC 43067 / DSM 2661 / JAL-1 / JCM 10045 / NBRC 100440) (Methanococcus jannaschii).